A 77-amino-acid polypeptide reads, in one-letter code: DNA-directed RNA polymerase subunit epsilon (77 aa).

The protein belongs to the RNA polymerase subunit epsilon family. As to quaternary structure, RNAP is composed of a core of 2 alpha, a beta and a beta' subunit. The core is associated with a delta subunit, and at least one of epsilon or omega. When a sigma factor is associated with the core the holoenzyme is formed, which can initiate transcription.

It catalyses the reaction RNA(n) + a ribonucleoside 5'-triphosphate = RNA(n+1) + diphosphate. Its function is as follows. A non-essential component of RNA polymerase (RNAP). This Streptococcus pneumoniae (strain P1031) protein is DNA-directed RNA polymerase subunit epsilon.